A 241-amino-acid polypeptide reads, in one-letter code: Probable porphobilinogen deaminase (241 aa).

Belongs to the HMBS family.

The catalysed reaction is 4 porphobilinogen + H2O = hydroxymethylbilane + 4 NH4(+). It participates in porphyrin-containing compound metabolism; protoporphyrin-IX biosynthesis; coproporphyrinogen-III from 5-aminolevulinate: step 2/4. Its function is as follows. Tetrapolymerization of the monopyrrole PBG into the hydroxymethylbilane pre-uroporphyrinogen in several discrete steps. This is Probable porphobilinogen deaminase (hemC) from Chlamydia trachomatis serovar D (strain ATCC VR-885 / DSM 19411 / UW-3/Cx).